A 437-amino-acid chain; its full sequence is Enolase 2 (437 aa).

A Glycyl lysine isopeptide (Lys-Gly) (interchain with G-Cter in ubiquitin) cross-link involves residue K60. S138 bears the Phosphoserine mark. H160 is a catalytic residue. S188 is modified (phosphoserine). Residue K243 forms a Glycyl lysine isopeptide (Lys-Gly) (interchain with G-Cter in ubiquitin) linkage. Mg(2+) is bound by residues D247 and E296. At T313 the chain carries Phosphothreonine. D321 is a Mg(2+) binding site. T324 carries the post-translational modification Phosphothreonine. Residue K358 forms a Glycyl lysine isopeptide (Lys-Gly) (interchain with G-Cter in ubiquitin) linkage.

Belongs to the enolase family. Homodimer. The cofactor is Mg(2+).

It localises to the cytoplasm. It carries out the reaction (2R)-2-phosphoglycerate = phosphoenolpyruvate + H2O. Its pathway is carbohydrate degradation; glycolysis; pyruvate from D-glyceraldehyde 3-phosphate: step 4/5. The sequence is that of Enolase 2 (ENO2) from Saccharomyces cerevisiae (strain ATCC 204508 / S288c) (Baker's yeast).